Reading from the N-terminus, the 285-residue chain is ATP synthase gamma chain (285 aa).

The protein belongs to the ATPase gamma chain family. In terms of assembly, F-type ATPases have 2 components, CF(1) - the catalytic core - and CF(0) - the membrane proton channel. CF(1) has five subunits: alpha(3), beta(3), gamma(1), delta(1), epsilon(1). CF(0) has three main subunits: a, b and c.

The protein localises to the cell membrane. Its function is as follows. Produces ATP from ADP in the presence of a proton gradient across the membrane. The gamma chain is believed to be important in regulating ATPase activity and the flow of protons through the CF(0) complex. The protein is ATP synthase gamma chain of Geobacillus kaustophilus (strain HTA426).